We begin with the raw amino-acid sequence, 113 residues long: U11-theraphotoxin-Hhn1q (113 aa).

Positions 1–21 are cleaved as a signal peptide; it reads MNTVRVTFLLVFVLAVSLGQA. Positions 22 to 74 are excised as a propeptide; sequence DKDENRMEMQEKTEQGKSYLDFAENLLLQKLEELEAKLLEEDSEESRNSRQKR. Residues 61 to 82 form a disordered region; the sequence is EEDSEESRNSRQKRCIGEGVPC. Disulfide bonds link cysteine 75-cysteine 90, cysteine 82-cysteine 95, and cysteine 89-cysteine 110.

This sequence belongs to the neurotoxin 14 (magi-1) family. 01 (HNTX-16) subfamily. In terms of tissue distribution, expressed by the venom gland.

It is found in the secreted. Its function is as follows. Probable ion channel inhibitor. This is U11-theraphotoxin-Hhn1q from Cyriopagopus hainanus (Chinese bird spider).